Reading from the N-terminus, the 342-residue chain is Protein-glutamate methylesterase/protein-glutamine glutaminase 1 (342 aa).

The region spanning 2–119 (RVAIVNDMPL…GDPKAAAQRL (118 aa)) is the Response regulatory domain. Asp-53 bears the 4-aspartylphosphate mark. Residues 146 to 329 (SDTDAALVVI…LPLGDIAPRL (184 aa)) enclose the CheB-type methylesterase domain. Residues Ser-158, His-185, and Asp-278 contribute to the active site.

The protein belongs to the CheB family. Phosphorylated by CheA. Phosphorylation of the N-terminal regulatory domain activates the methylesterase activity.

The protein localises to the cytoplasm. The catalysed reaction is [protein]-L-glutamate 5-O-methyl ester + H2O = L-glutamyl-[protein] + methanol + H(+). The enzyme catalyses L-glutaminyl-[protein] + H2O = L-glutamyl-[protein] + NH4(+). Its function is as follows. Involved in chemotaxis. Part of a chemotaxis signal transduction system that modulates chemotaxis in response to various stimuli. Catalyzes the demethylation of specific methylglutamate residues introduced into the chemoreceptors (methyl-accepting chemotaxis proteins or MCP) by CheR. Also mediates the irreversible deamidation of specific glutamine residues to glutamic acid. This Bordetella avium (strain 197N) protein is Protein-glutamate methylesterase/protein-glutamine glutaminase 1.